The sequence spans 459 residues: Vanillin aminotransferase (459 aa).

Pyridoxal 5'-phosphate contacts are provided by residues 115–116 (GS) and aspartate 255. N6-(pyridoxal phosphate)lysine is present on lysine 284. 320-321 (FT) serves as a coordination point for pyridoxal 5'-phosphate. A coiled-coil region spans residues 428–459 (LSLEELDELIRIYGKALKDTEKRVEELKSQKK).

Belongs to the class-III pyridoxal-phosphate-dependent aminotransferase family. As to expression, expressed in placental tissue of immature fruit.

It carries out the reaction vanillin + L-alanine = vanillylamine + pyruvate. Functionally, involved in the biosynthesis of capsaicinoids natural products, pungent alkaloids synthesized from phenylpropanoid intermediates in the placental tissue of chili pepper fruit acting as repellant on herbivorous mammals and conferring spiciness to hot peppers. Can transfer an amine from alanine to vanillin, forming vanillylamine and pyruvate. This is Vanillin aminotransferase from Capsicum frutescens (Cayenne pepper).